The following is a 444-amino-acid chain: Bifunctional protein GlmU (444 aa).

Positions 1–226 (MTDSTHRTTA…EAELAGVNSR (226 aa)) are pyrophosphorylase. UDP-N-acetyl-alpha-D-glucosamine contacts are provided by residues 13–16 (LAAG), lysine 27, glutamine 75, and 80–81 (GT). Aspartate 103 lines the Mg(2+) pocket. UDP-N-acetyl-alpha-D-glucosamine contacts are provided by glycine 139, glutamate 153, asparagine 168, and asparagine 224. Asparagine 224 contacts Mg(2+). The linker stretch occupies residues 227–247 (SELARAEATLQTRLRNAAMDA). The N-acetyltransferase stretch occupies residues 248–444 (GVTLVAPETV…QSLKARKEQG (197 aa)). Arginine 313 and lysine 331 together coordinate UDP-N-acetyl-alpha-D-glucosamine. Histidine 343 (proton acceptor) is an active-site residue. Tyrosine 346 and asparagine 357 together coordinate UDP-N-acetyl-alpha-D-glucosamine. Acetyl-CoA contacts are provided by residues alanine 360, 366 to 367 (NY), serine 385, alanine 403, and arginine 420.

This sequence in the N-terminal section; belongs to the N-acetylglucosamine-1-phosphate uridyltransferase family. The protein in the C-terminal section; belongs to the transferase hexapeptide repeat family. As to quaternary structure, homotrimer. It depends on Mg(2+) as a cofactor.

The protein resides in the cytoplasm. The enzyme catalyses alpha-D-glucosamine 1-phosphate + acetyl-CoA = N-acetyl-alpha-D-glucosamine 1-phosphate + CoA + H(+). It carries out the reaction N-acetyl-alpha-D-glucosamine 1-phosphate + UTP + H(+) = UDP-N-acetyl-alpha-D-glucosamine + diphosphate. Its pathway is nucleotide-sugar biosynthesis; UDP-N-acetyl-alpha-D-glucosamine biosynthesis; N-acetyl-alpha-D-glucosamine 1-phosphate from alpha-D-glucosamine 6-phosphate (route II): step 2/2. It functions in the pathway nucleotide-sugar biosynthesis; UDP-N-acetyl-alpha-D-glucosamine biosynthesis; UDP-N-acetyl-alpha-D-glucosamine from N-acetyl-alpha-D-glucosamine 1-phosphate: step 1/1. The protein operates within bacterial outer membrane biogenesis; LPS lipid A biosynthesis. Its function is as follows. Catalyzes the last two sequential reactions in the de novo biosynthetic pathway for UDP-N-acetylglucosamine (UDP-GlcNAc). The C-terminal domain catalyzes the transfer of acetyl group from acetyl coenzyme A to glucosamine-1-phosphate (GlcN-1-P) to produce N-acetylglucosamine-1-phosphate (GlcNAc-1-P), which is converted into UDP-GlcNAc by the transfer of uridine 5-monophosphate (from uridine 5-triphosphate), a reaction catalyzed by the N-terminal domain. The polypeptide is Bifunctional protein GlmU (Gluconobacter oxydans (strain 621H) (Gluconobacter suboxydans)).